A 153-amino-acid chain; its full sequence is ATP synthase subunit a (153 aa).

2 consecutive transmembrane segments (helical) span residues 43-63 (AFHL…LLIF) and 104-124 (IAPL…VDLI).

It belongs to the ATPase A chain family. As to quaternary structure, F-type ATPases have 2 components, CF(1) - the catalytic core - and CF(0) - the membrane proton channel. CF(1) has five subunits: alpha(3), beta(3), gamma(1), delta(1), epsilon(1). CF(0) has three main subunits: a(1), b(2) and c(9-12). The alpha and beta chains form an alternating ring which encloses part of the gamma chain. CF(1) is attached to CF(0) by a central stalk formed by the gamma and epsilon chains, while a peripheral stalk is formed by the delta and b chains.

Its subcellular location is the cell inner membrane. Its function is as follows. Key component of the proton channel; it plays a direct role in the translocation of protons across the membrane. The polypeptide is ATP synthase subunit a (atpB) (Pseudomonas putida (Arthrobacter siderocapsulatus)).